The following is a 317-amino-acid chain: Ferrochelatase (317 aa).

Fe cation contacts are provided by H192 and E271.

This sequence belongs to the ferrochelatase family.

Its subcellular location is the cytoplasm. It carries out the reaction heme b + 2 H(+) = protoporphyrin IX + Fe(2+). Its pathway is porphyrin-containing compound metabolism; protoheme biosynthesis; protoheme from protoporphyrin-IX: step 1/1. Functionally, catalyzes the ferrous insertion into protoporphyrin IX. The sequence is that of Ferrochelatase from Geobacter metallireducens (strain ATCC 53774 / DSM 7210 / GS-15).